The sequence spans 62 residues: Insect toxin BsIT4 (62 aa).

The 62-residue stretch at 1–62 (DGYIKGNKGC…WLYAATNTCG (62 aa)) folds into the LCN-type CS-alpha/beta domain. Cystine bridges form between C10/C61, C14/C35, C21/C42, and C25/C44.

This sequence belongs to the long (4 C-C) scorpion toxin superfamily. Sodium channel inhibitor family. Beta subfamily. As to expression, expressed by the venom gland.

The protein localises to the secreted. Depressant insect beta-toxins cause a transient contraction paralysis followed by a slow flaccid paralysis. They bind voltage-independently at site-4 of sodium channels (Nav) and shift the voltage of activation toward more negative potentials thereby affecting sodium channel activation and promoting spontaneous and repetitive firing. This toxin is active only on insects. This Hottentotta tamulus sindicus (Scorpion) protein is Insect toxin BsIT4.